Consider the following 403-residue polypeptide: Protein LAZ1 homolog 2 (403 aa).

Helical transmembrane passes span 16–36, 50–70, 162–182, 191–211, 236–256, and 269–289; these read SLII…YSIL, WIVS…ISLS, MILK…GVYG, GYPY…FCLV, IVFA…YGIL, and FLIC…FPAE. The segment at 381 to 403 is disordered; sequence SDGKEETEVTEEVTVETSVPPKE.

It belongs to the TMEM184 family.

Its subcellular location is the membrane. The chain is Protein LAZ1 homolog 2 from Arabidopsis thaliana (Mouse-ear cress).